The sequence spans 622 residues: MTFLQFAYKNVTRNKRAYLAFFLSSAFSVLIFFTFAMFLFHPALKEGYLNNIAKKGLTAAEWMIFVFSFLFVLYSVNAFLKSRNKEFGILLMQGITPGQLRKLITAENMIIGVMSIAAGIIGGFIFSKTFFTVGAYILEMDALPLYMPWKALGITACGFLLLFFFLSQFTILFVRSNTVIKLIKGTGKVKPEPKPSVLLSLFGIACLCGGYGMVLKGNVHGAEPFIILLLTVIGTYFFFSQSSIWILRALKKWKTFYLRGKNIIWVSDLVYRLKDNARLFFIVSIISAVAFTATGVLAMYKSTVGAEESAYEMEYLSYSNNPKEQTHLKDIDHELKTHGFTYTKDKIDVSYVRYQEGETVPPVYMISESDAAKYFHVKVNGLKEDEAVYFPGTYDRNFKNEAPDQLKLLNQKGELSDQKLSVKEVKKPLISLNAIIAVNDQTFDQLKSLGDKASLYGYSYDHWKDSLEISQSLQNEIYGNYIDVHSDFASKAGTYYDTVQLPSLSLFIGLFIAIVFFVAAASFLYFRLFTDLDEDRERYRSLAKIGLSEREMAQSVTIQLAILFFFPFVIAVMHTLFALRTLAVEGYSDVAGPLSLTIGGFFIFQLLFFLAVRSSYLKKMNK.

10 helical membrane-spanning segments follow: residues 20 to 40 (AFFLSSAFSVLIFFTFAMFLF), 56 to 76 (GLTAAEWMIFVFSFLFVLYSV), 118 to 138 (AGIIGGFIFSKTFFTVGAYIL), 154 to 174 (ITACGFLLLFFFLSQFTILFV), 195 to 215 (PSVLLSLFGIACLCGGYGMVL), 219 to 239 (VHGAEPFIILLLTVIGTYFFF), 279 to 299 (LFFIVSIISAVAFTATGVLAM), 498 to 518 (TVQLPSLSLFIGLFIAIVFFV), 558 to 578 (IQLAILFFFPFVIAVMHTLFA), and 590 to 610 (VAGPLSLTIGGFFIFQLLFFL).

It belongs to the ABC-4 integral membrane protein family. As to quaternary structure, the complex is composed of two ATP-binding proteins (YxdL) and two transmembrane proteins (YxdM).

The protein resides in the cell membrane. Its function is as follows. Part of the ABC transporter complex YxdLM which could be involved in peptide resistance. This Bacillus subtilis (strain 168) protein is ABC transporter permease protein YxdM (yxdM).